Consider the following 1052-residue polypeptide: Ubiquitin-like modifier-activating enzyme 6 (1052 aa).

At Met1 the chain carries N-acetylmethionine. The segment at 1-21 (MEGSEPVAAHQGEEASCSSWG) is disordered. Arg46 lines the ATP pocket. A Phosphothreonine modification is found at Thr54. At Ser301 the chain carries Phosphoserine. Ala470 and Asp497 together coordinate ATP. Mg(2+) is bound by residues Asp499 and Glu502. Asn505, Arg508, Gln509, and Lys521 together coordinate ATP. Lys544 is modified (N6-acetyllysine). Val545 is a binding site for ATP. Mg(2+) is bound at residue Asp569. Asn570 is an ATP binding site. Cys625 acts as the Glycyl thioester intermediate in catalysis. Lys729 bears the N6-acetyllysine mark. Ser737 carries the post-translational modification Phosphoserine.

The protein belongs to the ubiquitin-activating E1 family. As to quaternary structure, forms a thioester with UBD in cells stimulated with tumor necrosis factor-alpha (TNFa) and interferon-gamma (IFNg). Widely expressed. Isoform 2 is predominantly expressed in testis with higher expression in adult testis than in fetal testis.

It carries out the reaction ATP + ubiquitin + [E1 ubiquitin-activating enzyme]-L-cysteine = AMP + diphosphate + S-ubiquitinyl-[E1 ubiquitin-activating enzyme]-L-cysteine.. Its pathway is protein modification; protein ubiquitination. Activates ubiquitin by first adenylating its C-terminal glycine residue with ATP, and thereafter linking this residue to the side chain of a cysteine residue in E1, yielding a ubiquitin-E1 thioester and free AMP. Specific for ubiquitin, does not activate ubiquitin-like peptides. Also activates UBD/FAT10 conjugation via adenylation of its C-terminal glycine. Differs from UBE1 in its specificity for substrate E2 charging. Does not charge cell cycle E2s, such as CDC34. Essential for embryonic development. Isoform 2 may play a key role in ubiquitin system and may influence spermatogenesis and male fertility. The polypeptide is Ubiquitin-like modifier-activating enzyme 6 (UBA6) (Homo sapiens (Human)).